The primary structure comprises 64 residues: Fatty acid-binding protein (64 aa).

Belongs to the calycin superfamily. Fatty-acid binding protein (FABP) family.

It is found in the cytoplasm. FABPs are thought to play a role in the intracellular transport of long-chain fatty acids and their acyl-CoA esters. In Acarus siro (Flour mite), this protein is Fatty acid-binding protein.